The following is a 305-amino-acid chain: Pseudouridine-5'-phosphate glycosidase (305 aa).

Catalysis depends on E28, which acts as the Proton donor. Substrate is bound by residues K89 and V109. Residue D141 participates in Mn(2+) binding. A substrate-binding site is contributed by 143–145; sequence SAD. K162 acts as the Nucleophile in catalysis.

This sequence belongs to the pseudouridine-5'-phosphate glycosidase family. In terms of assembly, homotrimer. Mn(2+) serves as cofactor.

The enzyme catalyses D-ribose 5-phosphate + uracil = psi-UMP + H2O. Functionally, catalyzes the reversible cleavage of pseudouridine 5'-phosphate (PsiMP) to ribose 5-phosphate and uracil. Functions biologically in the cleavage direction, as part of a pseudouridine degradation pathway. In Dinoroseobacter shibae (strain DSM 16493 / NCIMB 14021 / DFL 12), this protein is Pseudouridine-5'-phosphate glycosidase.